Here is a 370-residue protein sequence, read N- to C-terminus: Phospho-N-acetylmuramoyl-pentapeptide-transferase (370 aa).

Transmembrane regions (helical) follow at residues Pro-21 to Ile-41, Leu-46 to Ile-66, Pro-92 to Leu-112, Phe-117 to Ile-137, Leu-151 to Ile-171, Ile-181 to Phe-201, Asp-217 to Ile-237, Asn-243 to Phe-263, Val-270 to Leu-290, Leu-298 to Phe-318, and Thr-349 to Leu-369.

Belongs to the glycosyltransferase 4 family. MraY subfamily. Mg(2+) is required as a cofactor.

Its subcellular location is the cell inner membrane. The catalysed reaction is UDP-N-acetyl-alpha-D-muramoyl-L-alanyl-gamma-D-glutamyl-meso-2,6-diaminopimeloyl-D-alanyl-D-alanine + di-trans,octa-cis-undecaprenyl phosphate = di-trans,octa-cis-undecaprenyl diphospho-N-acetyl-alpha-D-muramoyl-L-alanyl-D-glutamyl-meso-2,6-diaminopimeloyl-D-alanyl-D-alanine + UMP. Its pathway is cell wall biogenesis; peptidoglycan biosynthesis. In terms of biological role, catalyzes the initial step of the lipid cycle reactions in the biosynthesis of the cell wall peptidoglycan: transfers peptidoglycan precursor phospho-MurNAc-pentapeptide from UDP-MurNAc-pentapeptide onto the lipid carrier undecaprenyl phosphate, yielding undecaprenyl-pyrophosphoryl-MurNAc-pentapeptide, known as lipid I. The polypeptide is Phospho-N-acetylmuramoyl-pentapeptide-transferase (Prochlorococcus marinus (strain SARG / CCMP1375 / SS120)).